The chain runs to 413 residues: N5-carboxyaminoimidazole ribonucleotide synthase (413 aa).

Positions 1-21 are disordered; that stretch reads MKRVSEQAGNPDGNPQAHVPG. ATP contacts are provided by residues Lys122, Lys162, 199-202, Glu207, and 289-290; these read EEKV and NE. In terms of domain architecture, ATP-grasp spans 126–319; the sequence is RERLAELGAP…QFEQHLRAVM (194 aa).

The protein belongs to the PurK/PurT family. As to quaternary structure, homodimer.

It carries out the reaction 5-amino-1-(5-phospho-beta-D-ribosyl)imidazole + hydrogencarbonate + ATP = 5-carboxyamino-1-(5-phospho-D-ribosyl)imidazole + ADP + phosphate + 2 H(+). It functions in the pathway purine metabolism; IMP biosynthesis via de novo pathway; 5-amino-1-(5-phospho-D-ribosyl)imidazole-4-carboxylate from 5-amino-1-(5-phospho-D-ribosyl)imidazole (N5-CAIR route): step 1/2. Catalyzes the ATP-dependent conversion of 5-aminoimidazole ribonucleotide (AIR) and HCO(3)(-) to N5-carboxyaminoimidazole ribonucleotide (N5-CAIR). This Corynebacterium ammoniagenes (Brevibacterium ammoniagenes) protein is N5-carboxyaminoimidazole ribonucleotide synthase.